A 147-amino-acid chain; its full sequence is UPF0306 protein YhbP (147 aa).

The protein belongs to the UPF0306 family.

In Escherichia fergusonii (strain ATCC 35469 / DSM 13698 / CCUG 18766 / IAM 14443 / JCM 21226 / LMG 7866 / NBRC 102419 / NCTC 12128 / CDC 0568-73), this protein is UPF0306 protein YhbP.